The chain runs to 485 residues: Chitin synthase regulator 2 (485 aa).

7 Sel1-like repeats span residues 164-202, 203-238, 239-275, 279-316, 317-353, 354-391, and 392-427; these read PDAQ…KHGH, PDAC…VGLH, PGAM…EHAT, PHAL…ELGY, APSA…QQDH, KDAC…ELGL, and AKAQ…EGGD. The interval 460-485 is disordered; the sequence is AANLAQRSGSGSGASGKDGKDGCLIM. Positions 476–485 are enriched in basic and acidic residues; that stretch reads KDGKDGCLIM. Cysteine methyl ester is present on Cys-482. The S-farnesyl cysteine moiety is linked to residue Cys-482. The propeptide at 483–485 is removed in mature form; it reads LIM.

Belongs to the SKT5 family.

The protein localises to the cell membrane. Activator of the chitin synthase CHS3 which polymerizes chitin, a structural polymer of the fungal cell wall. Chitin produced by CHS3 is deacetylated to chitosan, which helps to maintain cell wall integrity, anchor melanin, and offers an advantage during infection, as chitosan is less readily detected by host immunosurveillance. The polypeptide is Chitin synthase regulator 2 (Cryptococcus neoformans var. grubii serotype A (strain H99 / ATCC 208821 / CBS 10515 / FGSC 9487) (Filobasidiella neoformans var. grubii)).